Here is a 247-residue protein sequence, read N- to C-terminus: ABC-type transporter ATP-binding protein EcsA (247 aa).

The region spanning 4–234 (LSVKDLTGGY…FGMKDAALDD (231 aa)) is the ABC transporter domain. Position 36 to 43 (36 to 43 (GLNGAGKS)) interacts with ATP.

The protein belongs to the ABC transporter superfamily.

Has a role in exoprotein production, sporulation and competence. This is ABC-type transporter ATP-binding protein EcsA (ecsA) from Bacillus subtilis (strain 168).